Here is a 151-residue protein sequence, read N- to C-terminus: UPF0208 membrane protein plu3094 (151 aa).

2 helical membrane-spanning segments follow: residues 46-65 (FGIR…QIAL) and 69-91 (LGPA…WWLG).

The protein belongs to the UPF0208 family.

It is found in the cell inner membrane. In Photorhabdus laumondii subsp. laumondii (strain DSM 15139 / CIP 105565 / TT01) (Photorhabdus luminescens subsp. laumondii), this protein is UPF0208 membrane protein plu3094.